Reading from the N-terminus, the 152-residue chain is MQNISKILVDADACPVKDEIVQIGTKFHVEILFVASYAHRSRKQQGNWIYVDSEQDEVDFYIYKHAKATDLVITQDMGLAGLLVKKGVYVLSPRGKFVTDEQMDTILYSRYVSAKLRRQGTYTKGPKSFSKQDRQSFLTSLEKILSNYKGIL.

The protein belongs to the UPF0178 family.

The protein is UPF0178 protein Bcer98_3021 of Bacillus cytotoxicus (strain DSM 22905 / CIP 110041 / 391-98 / NVH 391-98).